A 179-amino-acid polypeptide reads, in one-letter code: Protein PLASTID REDOX INSENSITIVE 2, chloroplastic (179 aa).

A chloroplast-targeting transit peptide spans 1–69 (MASMHEALFS…SLSRRGFVCR (69 aa)).

As to quaternary structure, binds DNA when in complex with CSP41b.

It is found in the plastid. It localises to the chloroplast stroma. The protein resides in the chloroplast nucleoid. Its function is as follows. Involved in redox-mediated retrograde signaling to synchronize the expression of photosynthetic genes from both the nuclear and plastidic genomes, especially in excess light conditions. Required for full expression of genes transcribed by the plastid-encoded RNA polymerase (PEP). Essential for embryo development. In Arabidopsis thaliana (Mouse-ear cress), this protein is Protein PLASTID REDOX INSENSITIVE 2, chloroplastic.